Consider the following 381-residue polypeptide: 2-methylcitrate synthase 1 (381 aa).

Residue histidine 192 coordinates substrate. Histidine 227 is an active-site residue. Position 260–264 (260–264 (RIMGF)) interacts with CoA. The active site involves histidine 266. Residue arginine 275 coordinates substrate. The active site involves aspartate 317. Substrate is bound by residues arginine 342 and arginine 361.

Belongs to the citrate synthase family. In terms of assembly, homodimer.

It catalyses the reaction propanoyl-CoA + oxaloacetate + H2O = (2S,3S)-2-methylcitrate + CoA + H(+). The enzyme catalyses oxaloacetate + acetyl-CoA + H2O = citrate + CoA + H(+). Its pathway is carbohydrate metabolism; tricarboxylic acid cycle. Catalyzes the Claisen condensation of propionyl-CoA and oxaloacetate (OAA) to yield 2-methylcitrate (2-MC) and CoA. Also catalyzes the condensation of oxaloacetate with propionyl-CoA but with a lower specificity. This is 2-methylcitrate synthase 1 (prpC1) from Corynebacterium glutamicum (strain ATCC 13032 / DSM 20300 / JCM 1318 / BCRC 11384 / CCUG 27702 / LMG 3730 / NBRC 12168 / NCIMB 10025 / NRRL B-2784 / 534).